The primary structure comprises 938 residues: Isoleucine--tRNA ligase (938 aa).

The short motif at 58–68 (PYANGSIHIGH) is the 'HIGH' region element. Position 183 is an N6-acetyllysine (Lys183). Glu561 is a binding site for L-isoleucyl-5'-AMP. A 'KMSKS' region motif is present at residues 602-606 (KMSKS). Lys605 is a binding site for ATP. Positions 901, 904, 921, and 924 each coordinate Zn(2+).

This sequence belongs to the class-I aminoacyl-tRNA synthetase family. IleS type 1 subfamily. In terms of assembly, monomer. Zn(2+) serves as cofactor.

The protein resides in the cytoplasm. It catalyses the reaction tRNA(Ile) + L-isoleucine + ATP = L-isoleucyl-tRNA(Ile) + AMP + diphosphate. In terms of biological role, catalyzes the attachment of isoleucine to tRNA(Ile). As IleRS can inadvertently accommodate and process structurally similar amino acids such as valine, to avoid such errors it has two additional distinct tRNA(Ile)-dependent editing activities. One activity is designated as 'pretransfer' editing and involves the hydrolysis of activated Val-AMP. The other activity is designated 'posttransfer' editing and involves deacylation of mischarged Val-tRNA(Ile). The polypeptide is Isoleucine--tRNA ligase (Escherichia coli O45:K1 (strain S88 / ExPEC)).